A 51-amino-acid polypeptide reads, in one-letter code: Defensin (51 aa).

3 disulfide bridges follow: cysteine 3–cysteine 31, cysteine 17–cysteine 36, and cysteine 21–cysteine 38. Phenylalanine 51 is modified (phenylalanine amide).

The protein localises to the secreted. Functionally, antibacterial peptide against Gram-positive and Gram-negative bacteria and fungi. This is Defensin from Bombus pascuorum (Common carder bumblebee).